The chain runs to 219 residues: 7-cyano-7-deazaguanine synthase (219 aa).

10 to 20 provides a ligand contact to ATP; the sequence is FSGGQDSTTCL. Residues Cys188, Cys197, Cys200, and Cys203 each contribute to the Zn(2+) site.

It belongs to the QueC family. As to quaternary structure, homodimer. It depends on Zn(2+) as a cofactor.

It carries out the reaction 7-carboxy-7-deazaguanine + NH4(+) + ATP = 7-cyano-7-deazaguanine + ADP + phosphate + H2O + H(+). It functions in the pathway purine metabolism; 7-cyano-7-deazaguanine biosynthesis. Its function is as follows. Catalyzes the ATP-dependent conversion of 7-carboxy-7-deazaguanine (CDG) to 7-cyano-7-deazaguanine (preQ(0)). This is 7-cyano-7-deazaguanine synthase from Clostridium botulinum (strain Langeland / NCTC 10281 / Type F).